Here is a 434-residue protein sequence, read N- to C-terminus: Methylenetetrahydrofolate--tRNA-(uracil-5-)-methyltransferase TrmFO (434 aa).

9-14 provides a ligand contact to FAD; that stretch reads GAGLAG.

It belongs to the MnmG family. TrmFO subfamily. It depends on FAD as a cofactor.

Its subcellular location is the cytoplasm. The enzyme catalyses uridine(54) in tRNA + (6R)-5,10-methylene-5,6,7,8-tetrahydrofolate + NADH + H(+) = 5-methyluridine(54) in tRNA + (6S)-5,6,7,8-tetrahydrofolate + NAD(+). It carries out the reaction uridine(54) in tRNA + (6R)-5,10-methylene-5,6,7,8-tetrahydrofolate + NADPH + H(+) = 5-methyluridine(54) in tRNA + (6S)-5,6,7,8-tetrahydrofolate + NADP(+). Functionally, catalyzes the folate-dependent formation of 5-methyl-uridine at position 54 (M-5-U54) in all tRNAs. The chain is Methylenetetrahydrofolate--tRNA-(uracil-5-)-methyltransferase TrmFO from Listeria monocytogenes serotype 4b (strain F2365).